A 239-amino-acid polypeptide reads, in one-letter code: LexA repressor (239 aa).

A DNA-binding region (H-T-H motif) is located at residues 26-46; that stretch reads FDEMKDALDLASKSGIHRLIT. Residues Ser-159 and Lys-197 each act as for autocatalytic cleavage activity in the active site.

This sequence belongs to the peptidase S24 family. As to quaternary structure, homodimer.

It carries out the reaction Hydrolysis of Ala-|-Gly bond in repressor LexA.. Its function is as follows. Represses a number of genes involved in the response to DNA damage (SOS response), including recA and lexA. In the presence of single-stranded DNA, RecA interacts with LexA causing an autocatalytic cleavage which disrupts the DNA-binding part of LexA, leading to derepression of the SOS regulon and eventually DNA repair. This chain is LexA repressor, found in Allorhizobium ampelinum (strain ATCC BAA-846 / DSM 112012 / S4) (Agrobacterium vitis (strain S4)).